Here is a 385-residue protein sequence, read N- to C-terminus: ATP phosphoribosyltransferase regulatory subunit (385 aa).

Belongs to the class-II aminoacyl-tRNA synthetase family. HisZ subfamily. As to quaternary structure, heteromultimer composed of HisG and HisZ subunits.

The protein resides in the cytoplasm. The protein operates within amino-acid biosynthesis; L-histidine biosynthesis; L-histidine from 5-phospho-alpha-D-ribose 1-diphosphate: step 1/9. Required for the first step of histidine biosynthesis. May allow the feedback regulation of ATP phosphoribosyltransferase activity by histidine. In Bordetella parapertussis (strain 12822 / ATCC BAA-587 / NCTC 13253), this protein is ATP phosphoribosyltransferase regulatory subunit.